The chain runs to 145 residues: Large ribosomal subunit protein uL16 (145 aa).

Belongs to the universal ribosomal protein uL16 family. As to quaternary structure, part of the 50S ribosomal subunit.

In terms of biological role, binds 23S rRNA and is also seen to make contacts with the A and possibly P site tRNAs. This Exiguobacterium sp. (strain ATCC BAA-1283 / AT1b) protein is Large ribosomal subunit protein uL16.